We begin with the raw amino-acid sequence, 493 residues long: Alpha-amylase-related protein (493 aa).

Positions 1 to 19 (MFKLALTLTLCLAGSLSLA) are cleaved as a signal peptide. Gln-20 carries the post-translational modification Pyrrolidone carboxylic acid. The cysteines at positions 47 and 103 are disulfide-linked. Ca(2+) is bound by residues Asn-117, Gln-168, and Asp-177. The cysteines at positions 156 and 170 are disulfide-linked. Arg-205 contacts chloride. Asp-207 acts as the Nucleophile in catalysis. His-211 is a Ca(2+) binding site. The active-site Proton donor is the Glu-244. Asn-307 and Arg-342 together coordinate chloride. 3 disulfides stabilise this stretch: Cys-375-Cys-381, Cys-417-Cys-440, and Cys-447-Cys-459.

The protein belongs to the glycosyl hydrolase 13 family. As to quaternary structure, monomer. Ca(2+) serves as cofactor. Chloride is required as a cofactor.

It is found in the secreted. It carries out the reaction Endohydrolysis of (1-&gt;4)-alpha-D-glucosidic linkages in polysaccharides containing three or more (1-&gt;4)-alpha-linked D-glucose units.. The chain is Alpha-amylase-related protein (Amyrel) from Drosophila yakuba (Fruit fly).